A 224-amino-acid chain; its full sequence is uncharacterized protein (224 aa).

The segment covering 44 to 139 (TSPPIVPLPT…PSPPPSPSPL (96 aa)) has biased composition (pro residues). The interval 44–145 (TSPPIVPLPT…PSPLGEPMYY (102 aa)) is disordered.

This is an uncharacterized protein from Lepidoptera (butterflies and moths).